A 48-amino-acid polypeptide reads, in one-letter code: Osteocalcin (48 aa).

The Gla domain maps to 1 to 44 (AGTAPADLTVAQLESLKEVCEANLACEHMMDVSGIIAAYTAYYG). The Ca(2+) site is built by Glu14, Glu18, Glu21, and Glu27. 4-carboxyglutamate occurs at positions 14, 18, and 21. The cysteines at positions 20 and 26 are disulfide-linked.

The protein belongs to the osteocalcin/matrix Gla protein family. Gamma-carboxyglutamate residues are formed by vitamin K dependent carboxylation by GGCX. These residues are essential for the binding of calcium.

The protein resides in the secreted. The protein localises to the extracellular space. It localises to the extracellular matrix. Its function is as follows. The carboxylated form is one of the main organic components of the bone matrix, which constitutes 1-2% of the total bone protein. The carboxylated form binds strongly to apatite and calcium. The chain is Osteocalcin (bglap) from Cyprinus carpio (Common carp).